Consider the following 515-residue polypeptide: Cytoplasmic dynein 1 light intermediate chain 1 (515 aa).

Low complexity predominate over residues 1 to 24; sequence MAAVGRAGSFGSSSASGAANNASA. Residues 1-34 form a disordered region; it reads MAAVGRAGSFGSSSASGAANNASAELRAGGEEDD. Residue 64 to 71 coordinates ATP; it reads GEDGAGKT. Disordered regions lie at residues 370 to 424 and 445 to 515; these read QSQL…DPNM and KTGS…GEAS. Over residues 397-409 the composition is skewed to polar residues; it reads RTPNRSVTSNVAS. Positions 448–468 are enriched in gly residues; that stretch reads SPGGPGGVGGSPGGGSAGGTG. Basic and acidic residues predominate over residues 490 to 499; that stretch reads ELDRISRKPE. The span at 502–515 shows a compositional bias: polar residues; sequence SPTSPTSPTEGEAS.

Belongs to the dynein light intermediate chain family. Homodimer. The cytoplasmic dynein 1 complex consists of two catalytic heavy chains (HCs) and a number of non-catalytic subunits presented by intermediate chains (ICs). Phosphorylated.

It localises to the cytoplasm. It is found in the cytoskeleton. The protein localises to the chromosome. Its subcellular location is the centromere. The protein resides in the kinetochore. It localises to the spindle pole. It is found in the recycling endosome membrane. Acts as one of several non-catalytic accessory components of the cytoplasmic dynein 1 complex that are thought to be involved in linking dynein to cargos and to adapter proteins that regulate dynein function. Cytoplasmic dynein 1 acts as a motor for the intracellular retrograde motility of vesicles and organelles along microtubules. May play a role in binding dynein to membranous organelles or chromosomes. May regulate the movement of peripheral sorting endosomes along microtubule tracks toward the microtubule organizing center/centrosome, generating the endosomal recycling compartment. This is Cytoplasmic dynein 1 light intermediate chain 1 (DYNC1LI1) from Gallus gallus (Chicken).